The following is a 470-amino-acid chain: tRNA-2-methylthio-N(6)-dimethylallyladenosine synthase (470 aa).

The 116-residue stretch at 1–116 (MTYTVRTYGC…LPALLRRSRH (116 aa)) folds into the MTTase N-terminal domain. Positions 10, 45, 79, 153, 157, and 160 each coordinate [4Fe-4S] cluster. In terms of domain architecture, Radical SAM core spans 139 to 369 (RESNYSAWVS…LDLQNRIALE (231 aa)). The TRAM domain maps to 372–439 (RKLIGKEVEL…PYHLIGDNAL (68 aa)).

It belongs to the methylthiotransferase family. MiaB subfamily. Monomer. [4Fe-4S] cluster serves as cofactor.

The protein resides in the cytoplasm. The enzyme catalyses N(6)-dimethylallyladenosine(37) in tRNA + (sulfur carrier)-SH + AH2 + 2 S-adenosyl-L-methionine = 2-methylsulfanyl-N(6)-dimethylallyladenosine(37) in tRNA + (sulfur carrier)-H + 5'-deoxyadenosine + L-methionine + A + S-adenosyl-L-homocysteine + 2 H(+). In terms of biological role, catalyzes the methylthiolation of N6-(dimethylallyl)adenosine (i(6)A), leading to the formation of 2-methylthio-N6-(dimethylallyl)adenosine (ms(2)i(6)A) at position 37 in tRNAs that read codons beginning with uridine. This is tRNA-2-methylthio-N(6)-dimethylallyladenosine synthase from Tropheryma whipplei (strain Twist) (Whipple's bacillus).